A 243-amino-acid chain; its full sequence is Probable transcriptional regulatory protein LGAS_1276 (243 aa).

The disordered stretch occupies residues 1 to 22 (MSGHSKWHNIQGRKNAQDAKRG).

This sequence belongs to the TACO1 family.

Its subcellular location is the cytoplasm. The protein is Probable transcriptional regulatory protein LGAS_1276 of Lactobacillus gasseri (strain ATCC 33323 / DSM 20243 / BCRC 14619 / CIP 102991 / JCM 1131 / KCTC 3163 / NCIMB 11718 / NCTC 13722 / AM63).